The following is a 167-amino-acid chain: MSLKAGDSFPEGVTFSYIPWAEDASEITSCGIPINYNASKEFANKKVVLFALPGAFTPVCSANHVPEYIQKLPELRAKGVDQVAVLAYNDAYVMSAWGKANGVTGDDILFLSDPEAKFSKSIGWADEEGRTYRYVLVIDNGKIIYAAKEAAKNSLELSRADHVLKQL.

The 165-residue stretch at 3-167 (LKAGDSFPEG…SRADHVLKQL (165 aa)) folds into the Thioredoxin domain. The Cysteine sulfenic acid (-SOH) intermediate role is filled by C60.

The protein belongs to the peroxiredoxin family. Prx5 subfamily. In terms of assembly, homodimer; disulfide-linked, upon oxidation.

The catalysed reaction is a hydroperoxide + [thioredoxin]-dithiol = an alcohol + [thioredoxin]-disulfide + H2O. In terms of biological role, thiol-specific peroxidase that catalyzes the reduction of hydrogen peroxide and organic hydroperoxides to water and alcohols, respectively. Plays a role in cell protection against oxidative stress by detoxifying peroxides and as sensor of hydrogen peroxide-mediated signaling events. This Penicillium citrinum protein is Peroxiredoxin Pen c 3.